A 264-amino-acid polypeptide reads, in one-letter code: Proteasome subunit alpha type-4 (264 aa).

This sequence belongs to the peptidase T1A family. As to quaternary structure, the 26S proteasome consists of a 20S proteasome core and two 19S regulatory subunits. The 20S proteasome core is composed of 28 subunits that are arranged in four stacked rings, resulting in a barrel-shaped structure. The two end rings are each formed by seven alpha subunits, and the two central rings are each formed by seven beta subunits. The catalytic chamber with the active sites is on the inside of the barrel. Interacts with PI31.

The protein resides in the cytoplasm. The protein localises to the nucleus. Its function is as follows. The proteasome is a multicatalytic proteinase complex which is characterized by its ability to cleave peptides with Arg, Phe, Tyr, Leu, and Glu adjacent to the leaving group at neutral or slightly basic pH. The proteasome has an ATP-dependent proteolytic activity. This is Proteasome subunit alpha type-4 (Prosalpha3) from Drosophila melanogaster (Fruit fly).